Here is a 449-residue protein sequence, read N- to C-terminus: Probable ubiquitin carboxyl-terminal hydrolase 8 (449 aa).

The UBP-type zinc-finger motif lies at 6–113; it reads EGCQHLKLKP…FKIKNIKAWQ (108 aa). The Zn(2+) site is built by cysteine 8, histidine 10, cysteine 38, cysteine 41, cysteine 51, cysteine 54, cysteine 59, histidine 64, histidine 68, histidine 74, cysteine 87, and cysteine 90. Positions 145 to 435 constitute a USP domain; that stretch reads RGIQNLGATC…QAYLLFYHER (291 aa). The active-site Nucleophile is the cysteine 154. Histidine 178, cysteine 183, cysteine 188, cysteine 191, histidine 246, cysteine 257, cysteine 259, histidine 262, cysteine 275, cysteine 278, cysteine 317, and cysteine 320 together coordinate Zn(2+). Catalysis depends on histidine 395, which acts as the Proton acceptor.

Belongs to the peptidase C19 family. UBP8 subfamily. As to quaternary structure, component of the 1.8 MDa SAGA (Spt-Ada-Gcn5 acetyltransferase) complex, which is composed of 19 subunits tra1, spt7, taf5, ngg1/ada3, sgf73, spt20, spt8, taf12, taf6, hfi1/ada1, ubp8, gcn5, ada2, spt3, sgf29, taf10, taf9, sgf11 and sus1. The SAGA complex is composed of 4 modules, namely the HAT (histone acetyltransferase) module (gcn5, ada2, ngg1/ada3 and sgf29), the DUB (deubiquitinating) module (ubp8, sgf11, sgf73 and sus1), the core or TAF (TBP-associated factor) module (taf5, taf6, taf9, taf10 and taf12), and the Tra1 or SPT (Suppressor of Ty) module (tra1, hfi1/ada1, spt3, spt7, spt8 and spt20). The Tra1/SPT module binds activators, the core module recruits TBP (TATA-binding protein), the HAT module contains the histone H3 acetyltransferase gcn5, and the DUB module comprises the histone H2B deubiquitinase ubp8.

The protein resides in the nucleus. Its subcellular location is the nucleoplasm. The catalysed reaction is Thiol-dependent hydrolysis of ester, thioester, amide, peptide and isopeptide bonds formed by the C-terminal Gly of ubiquitin (a 76-residue protein attached to proteins as an intracellular targeting signal).. Its function is as follows. Histone deubiquitinating enzyme component of the transcription coactivator SAGA complex. SAGA acts as a general cofactor required for essentially all RNA polymerase II transcription. At the promoters, SAGA is required for transcription pre-initiation complex (PIC) recruitment. It influences RNA polymerase II transcriptional activity through different activities such as TBP interaction (via core/TAF module) and promoter selectivity, interaction with transcription activators (via Tra1/SPT module), and chromatin modification through histone acetylation (via HAT module) and deubiquitination (via DUB module). SAGA preferentially acetylates histones H3 (to form H3K9ac, H3K14ac, H3K18ac and H3K23ac) and H2B and deubiquitinates histone H2B. SAGA interacts with DNA via upstream activating sequences (UASs). Within the DUB module, the correctly positioned zinc finger domains of sgf11 and sgf73 are both required to fully activate the ubiquitin hydrolase ubp8. The DUB module is also linked to the splicing efficiency of many transcripts. The sequence is that of Probable ubiquitin carboxyl-terminal hydrolase 8 (ubp8) from Schizosaccharomyces pombe (strain 972 / ATCC 24843) (Fission yeast).